The sequence spans 310 residues: Protoheme IX farnesyltransferase 2 (310 aa).

9 helical membrane-spanning segments follow: residues isoleucine 21 to glycine 41, isoleucine 46 to leucine 66, phenylalanine 99 to threonine 119, tryptophan 125 to leucine 145, isoleucine 153 to threonine 173, glycine 180 to leucine 200, valine 226 to leucine 246, valine 256 to valine 276, and alanine 284 to valine 304.

This sequence belongs to the UbiA prenyltransferase family. Protoheme IX farnesyltransferase subfamily.

It is found in the cell membrane. The enzyme catalyses heme b + (2E,6E)-farnesyl diphosphate + H2O = Fe(II)-heme o + diphosphate. It functions in the pathway porphyrin-containing compound metabolism; heme O biosynthesis; heme O from protoheme: step 1/1. Converts heme B (protoheme IX) to heme O by substitution of the vinyl group on carbon 2 of heme B porphyrin ring with a hydroxyethyl farnesyl side group. This is Protoheme IX farnesyltransferase 2 from Cenarchaeum symbiosum (strain A).